We begin with the raw amino-acid sequence, 176 residues long: Protein GrpE (176 aa).

The protein belongs to the GrpE family. Homodimer.

Its subcellular location is the cytoplasm. Participates actively in the response to hyperosmotic and heat shock by preventing the aggregation of stress-denatured proteins, in association with DnaK and GrpE. It is the nucleotide exchange factor for DnaK and may function as a thermosensor. Unfolded proteins bind initially to DnaJ; upon interaction with the DnaJ-bound protein, DnaK hydrolyzes its bound ATP, resulting in the formation of a stable complex. GrpE releases ADP from DnaK; ATP binding to DnaK triggers the release of the substrate protein, thus completing the reaction cycle. Several rounds of ATP-dependent interactions between DnaJ, DnaK and GrpE are required for fully efficient folding. The protein is Protein GrpE of Rickettsia bellii (strain OSU 85-389).